A 430-amino-acid chain; its full sequence is uncharacterized protein (430 aa).

This is an uncharacterized protein from Escherichia coli (strain K12).